The following is a 478-amino-acid chain: Ankyrin repeat and BTB/POZ domain-containing protein 1 (478 aa).

2 ANK repeats span residues Met-1–Val-31 and Trp-35–Ala-64. BTB domains are found at residues Ser-115 to Val-182 and Pro-272 to Pro-346. A coiled-coil region spans residues Val-451–Asp-477.

In terms of tissue distribution, ubiquitously expressed in all fetal tissues examined including heart, brain, liver, and kidney. Also expressed at lower levels in both adult heart and hypertrophic heart.

It localises to the cytoplasm. May act as a mediator of the PTEN growth-suppressive signaling pathway. May play a role in developmental processes. In Homo sapiens (Human), this protein is Ankyrin repeat and BTB/POZ domain-containing protein 1.